Reading from the N-terminus, the 208-residue chain is Uracil phosphoribosyltransferase (208 aa).

Residues R78, R103, and 130 to 138 contribute to the 5-phospho-alpha-D-ribose 1-diphosphate site; that span reads DPMLATGGS. Residues I193 and 198–200 contribute to the uracil site; that span reads GDA. D199 lines the 5-phospho-alpha-D-ribose 1-diphosphate pocket.

It belongs to the UPRTase family. It depends on Mg(2+) as a cofactor.

It catalyses the reaction UMP + diphosphate = 5-phospho-alpha-D-ribose 1-diphosphate + uracil. The protein operates within pyrimidine metabolism; UMP biosynthesis via salvage pathway; UMP from uracil: step 1/1. With respect to regulation, allosterically activated by GTP. In terms of biological role, catalyzes the conversion of uracil and 5-phospho-alpha-D-ribose 1-diphosphate (PRPP) to UMP and diphosphate. In Actinobacillus succinogenes (strain ATCC 55618 / DSM 22257 / CCUG 43843 / 130Z), this protein is Uracil phosphoribosyltransferase.